The chain runs to 184 residues: Interferon alpha-1 (184 aa).

The N-terminal stretch at 1–23 (MALPVSLLMALVVLSCHSICSLG) is a signal peptide. Cystine bridges form between cysteine 24-cysteine 122 and cysteine 52-cysteine 162.

This sequence belongs to the alpha/beta interferon family. In terms of assembly, interacts with CR2.

Its subcellular location is the secreted. Its function is as follows. Produced by macrophages, IFN-alpha have antiviral activities. Interferon stimulates the production of two enzymes: a protein kinase and an oligoadenylate synthetase. The polypeptide is Interferon alpha-1 (Equus caballus (Horse)).